The following is a 347-amino-acid chain: MDLYDYMAPTTTTEEDDEEGYEKLKEEMGSALNNLTNGKFGLFWNSMKEKSENFLDDTKGKASSGMQQLKSQLEENIPVNSAMENLRKVEETAGSFWSGFGSTVNGFLDQALQISPKEDDVSTPTHEASSSVFLNRHERQLLELVQNENTFTQIISEPSHGITFESWEKEISIDGKTEEISLLLEEYPDLRKQMESLVPSEVSYDDFWKRFFWHKEVVQPIKAIQSGNDEEEIFSWGDERSDEEESDNEQVNDEKKQSSEEDTTENNSAAEVIDETVNDLESAVSKGLQIETQPASHDGEVDGEVKEEEENKVSSSSNIEASQSSLEVKDEANRKVDDDDEDDDDWE.

Threonine 123 and threonine 125 each carry phosphothreonine. One can recognise a BSD domain in the interval 167 to 219 (WEKEISIDGKTEEISLLLEEYPDLRKQMESLVPSEVSYDDFWKRFFWHKEVVQ). Residues 229-347 (DEEEIFSWGD…DDDEDDDDWE (119 aa)) are disordered. A phosphoserine mark is found at serine 235, serine 241, and serine 246. Residues 240 to 251 (RSDEEESDNEQV) show a composition bias toward acidic residues. Over residues 297-312 (HDGEVDGEVKEEEENK) the composition is skewed to basic and acidic residues. Over residues 313–325 (VSSSSNIEASQSS) the composition is skewed to low complexity. The span at 327–337 (EVKDEANRKVD) shows a compositional bias: basic and acidic residues. Residues 338-347 (DDDEDDDDWE) are compositionally biased toward acidic residues.

Its subcellular location is the cytoplasm. This chain is BSD domain-containing protein C22A12.14c, found in Schizosaccharomyces pombe (strain 972 / ATCC 24843) (Fission yeast).